We begin with the raw amino-acid sequence, 536 residues long: Thiamine transport system permease protein ThiP (536 aa).

A run of 12 helical transmembrane segments spans residues 16–36 (GLCA…ALWL), 58–78 (FSFW…VFLA), 95–115 (LCAM…LSVY), 134–154 (FSPY…LPMA), 199–219 (VAAL…SLGG), 240–260 (PARA…LVLL), 291–311 (DALL…AVVV), 334–354 (SLRI…MLLW), 373–393 (LSGM…FFLL), 404–424 (ADGI…LKVL), 463–483 (AQAL…VALF), and 506–526 (DGAV…TLIE). The ABC transmembrane type-1 1 domain maps to 56-261 (VRFSFWQAFL…VCCLALVLLS (206 aa)). The region spanning 331-525 (VWTSLRIALA…LLCFTLFTLI (195 aa)) is the ABC transmembrane type-1 2 domain.

Belongs to the binding-protein-dependent transport system permease family. As to quaternary structure, the complex is composed of two ATP-binding proteins (ThiQ), two transmembrane proteins (ThiP) and a solute-binding protein (ThiB).

It localises to the cell inner membrane. Part of the ABC transporter complex ThiBPQ involved in thiamine import. Probably responsible for the translocation of the substrate across the membrane. Is also involved in thiamine pyrophosphate transport. The sequence is that of Thiamine transport system permease protein ThiP from Salmonella typhimurium (strain LT2 / SGSC1412 / ATCC 700720).